Reading from the N-terminus, the 199-residue chain is Superoxide dismutase [Mn/Fe] 1 (199 aa).

Fe(3+) contacts are provided by H27, H81, D161, and H165. Mn(2+) is bound by residues H27, H81, D161, and H165.

Belongs to the iron/manganese superoxide dismutase family. As to quaternary structure, homodimer. Can also form a heterodimer with SodM. The cofactor is Mn(2+). Fe(3+) serves as cofactor.

The catalysed reaction is 2 superoxide + 2 H(+) = H2O2 + O2. In terms of biological role, destroys superoxide anion radicals which are normally produced within the cells and which are toxic to biological systems. Catalyzes the dismutation of superoxide anion radicals into O2 and H2O2 by successive reduction and oxidation of the transition metal ion at the active site. The polypeptide is Superoxide dismutase [Mn/Fe] 1 (sodA) (Staphylococcus aureus (strain USA300)).